The following is a 45-amino-acid chain: Large ribosomal subunit protein bL34 (45 aa).

Belongs to the bacterial ribosomal protein bL34 family.

This Salinispora tropica (strain ATCC BAA-916 / DSM 44818 / JCM 13857 / NBRC 105044 / CNB-440) protein is Large ribosomal subunit protein bL34.